A 663-amino-acid chain; its full sequence is Alcohol oxidase (663 aa).

8-39 (DVIVCGGGSTGCVIAGRLANVDENLKVLLIEN) contributes to the FAD binding site. H567 functions as the Proton acceptor in the catalytic mechanism. The Microbody targeting signal signature appears at 661–663 (ARY).

The protein belongs to the GMC oxidoreductase family. As to quaternary structure, homooctamer. Requires FAD as cofactor.

It localises to the peroxisome matrix. The catalysed reaction is a primary alcohol + O2 = an aldehyde + H2O2. It functions in the pathway energy metabolism; methane degradation. Functionally, catalyzes the oxidation of methanol to formaldehyde and hydrogen peroxide, the first step in the methanol utilization pathway of methylotrophic yeasts. The polypeptide is Alcohol oxidase (AOD1) (Candida boidinii (Yeast)).